Here is a 274-residue protein sequence, read N- to C-terminus: MQTWRLLHTGKGSAAFNMAVDEAVMIAHSRGEVPPTLRLYGWDPPTLSIGYFQRAGKEVDFEALSARGYGFVRRPTGGRAVLHDREVTYSVVVSESYPGMPGSVTESYRVISEGLVRGLRKLGFDAHFARPDEEGRQRLAAPSSAACFDSPSWYEVVVEGKKLVGSAQTRQRGVILQHGSILLDLDPEALFAVLRFPSDRVRDRLRRTFEEHAVSLRDLAGAPVSAERVEEALAEGFAEALGARLEPGELTAEERETAEQLMAKYLADEWNYRK.

The 215-residue stretch at 31 to 245 folds into the BPL/LPL catalytic domain; that stretch reads GEVPPTLRLY…GFAEALGARL (215 aa). Cys-147 acts as the Acyl-thioester intermediate in catalysis.

Belongs to the octanoyltransferase LipM family. Monomer.

The catalysed reaction is octanoyl-[ACP] + L-lysyl-[protein] = N(6)-octanoyl-L-lysyl-[protein] + holo-[ACP] + H(+). Its pathway is protein modification; protein lipoylation via endogenous pathway; protein N(6)-(lipoyl)lysine from octanoyl-[acyl-carrier-protein]. Its function is as follows. Catalyzes the transfer of endogenously produced octanoic acid from octanoyl-acyl-carrier-protein onto the lipoyl domain of GcvH, an intermediate carrier during protein lipoylation. This chain is Octanoyltransferase LipM, found in Kyrpidia tusciae (strain DSM 2912 / NBRC 15312 / T2) (Bacillus tusciae).